The chain runs to 404 residues: Inner membrane transport protein YdiM (404 aa).

Residues 1-5 (MKNPY) lie on the Periplasmic side of the membrane. A helical membrane pass occupies residues 6–26 (FPTALGLYFNYLVHGMGVLLM). The Cytoplasmic segment spans residues 27–43 (SLNMASLETLWQTNAAG). Residues 44-64 (VSIVISSLGIGRLSVLLFAGL) form a helical membrane-spanning segment. The Periplasmic portion of the chain corresponds to 65–84 (LSDRFGRRPFIMLGMCCYMA). A helical transmembrane segment spans residues 85 to 105 (FFFGILQTNNIIIAYVFGFLA). Topologically, residues 106–132 (GMANSFLDAGTYPSLMEAFPRSPGTAN) are cytoplasmic. The helical transmembrane segment at 133-153 (ILIKAFVSSGQFLLPLIISLL) threads the bilayer. The Periplasmic segment spans residues 154-157 (VWAE). Residues 158-178 (LWFGWSFMIAAGIMFINALFL) traverse the membrane as a helical segment. The Cytoplasmic segment spans residues 179–206 (YRCTFPPHPGRRLPVIKKTTSSTEHRCS). Residues 207-227 (IIDLASYTLYGYISMATFYLV) form a helical membrane-spanning segment. At 228-246 (SQWLAQYGQFVAGMSYTMS) the chain is on the periplasmic side. A helical transmembrane segment spans residues 247-267 (IKLLSIYTVGSLLCVFITAPL). Residues 268–273 (IRNTVR) are Cytoplasmic-facing. The chain crosses the membrane as a helical span at residues 274-294 (PTTLLMLYTFISFIALFTVCL). Topologically, residues 295 to 296 (HP) are periplasmic. Residues 297 to 317 (TFYVVIIFAFVIGFTSAGGVV) form a helical membrane-spanning segment. Residues 318 to 336 (QIGLTLMAERFPYAKGKAT) lie on the Cytoplasmic side of the membrane. Residues 337–357 (GIYYSAGSIATFTIPLITAHL) traverse the membrane as a helical segment. Residues 358 to 364 (SQRSIAD) lie on the Periplasmic side of the membrane. The chain crosses the membrane as a helical span at residues 365-385 (IMWFDTAIAAIGFLLALFIGL). Residues 386–404 (RSRKKTRHHSLKENVAPGG) are Cytoplasmic-facing.

This sequence belongs to the major facilitator superfamily.

The protein localises to the cell inner membrane. The protein is Inner membrane transport protein YdiM (ydiM) of Escherichia coli (strain K12).